We begin with the raw amino-acid sequence, 443 residues long: MPYVPHSPEEIREMLDVIGVNSVEDLFAEIPAELRPKSFNLPKGKSEMAVLQQLDKMAAKNTTDLTSFLGAGFYDHFIPTAVDALSSRSEFYTAYTPYQPESSQGTLQAIFEYQTAMARLMDMDYANASVYDGGSALYEATLMAVRKTRRRKIIVSEALNPIYRVMLDSYTTNLNLELVTVPHNHGRTNVKSITAAVDKDTAAVIVQNPNFFGSVNDFTEMFAAVHEHKALAIMSTYPVMQSVLKTPGQMGADIAVADGQSIGQPLSFGGPYLGIMTCSKALVRQMPGRIAGRTEDEDGKTGYVLTIQAREQHIRRQKATSNICSNQALCALRTLIHLCLLGEEGLNRTAVLSVERAHYAAERLTAIDGVEMFTKGPFGNEFAVTLPVNAFEVIDKLTERGIIPGFPVGRYYEGLENVLLVACTEKTTEEQIGIFAEILRGTI.

This sequence belongs to the GcvP family. N-terminal subunit subfamily. As to quaternary structure, the glycine cleavage system is composed of four proteins: P, T, L and H. In this organism, the P 'protein' is a heterodimer of two subunits.

The enzyme catalyses N(6)-[(R)-lipoyl]-L-lysyl-[glycine-cleavage complex H protein] + glycine + H(+) = N(6)-[(R)-S(8)-aminomethyldihydrolipoyl]-L-lysyl-[glycine-cleavage complex H protein] + CO2. The glycine cleavage system catalyzes the degradation of glycine. The P protein binds the alpha-amino group of glycine through its pyridoxal phosphate cofactor; CO(2) is released and the remaining methylamine moiety is then transferred to the lipoamide cofactor of the H protein. The polypeptide is Probable glycine dehydrogenase (decarboxylating) subunit 1 (Maridesulfovibrio salexigens (strain ATCC 14822 / DSM 2638 / NCIMB 8403 / VKM B-1763) (Desulfovibrio salexigens)).